A 231-amino-acid polypeptide reads, in one-letter code: NADH-ubiquinone oxidoreductase chain 4 (231 aa).

The next 6 helical transmembrane spans lie at 1–21, 34–54, 61–80, 84–106, 128–148, and 169–189; these read PIAGSMVLAAILLKLGGYGII, MFLPFIVLALWGAILANLTCL, SLIAYSSISHMGLVVAAIII, WGLTGAMTLMIAHGFTSSALFCL, ILPMTTTWWLLANLMNIATPP, and TIILLGLSMLITASYSLHMFL.

This sequence belongs to the complex I subunit 4 family.

It is found in the mitochondrion membrane. The enzyme catalyses a ubiquinone + NADH + 5 H(+)(in) = a ubiquinol + NAD(+) + 4 H(+)(out). In terms of biological role, core subunit of the mitochondrial membrane respiratory chain NADH dehydrogenase (Complex I) that is believed to belong to the minimal assembly required for catalysis. Complex I functions in the transfer of electrons from NADH to the respiratory chain. The immediate electron acceptor for the enzyme is believed to be ubiquinone. The sequence is that of NADH-ubiquinone oxidoreductase chain 4 (MT-ND4) from Atropoides picadoi (Picado's pit viper).